A 473-amino-acid polypeptide reads, in one-letter code: 3-isopropylmalate dehydratase large subunit 2 (473 aa).

Positions 350, 410, and 413 each coordinate [4Fe-4S] cluster.

This sequence belongs to the aconitase/IPM isomerase family. LeuC type 1 subfamily. As to quaternary structure, heterodimer of LeuC and LeuD. The cofactor is [4Fe-4S] cluster.

It catalyses the reaction (2R,3S)-3-isopropylmalate = (2S)-2-isopropylmalate. It functions in the pathway amino-acid biosynthesis; L-leucine biosynthesis; L-leucine from 3-methyl-2-oxobutanoate: step 2/4. Catalyzes the isomerization between 2-isopropylmalate and 3-isopropylmalate, via the formation of 2-isopropylmaleate. The chain is 3-isopropylmalate dehydratase large subunit 2 from Salmonella typhimurium (strain LT2 / SGSC1412 / ATCC 700720).